The sequence spans 478 residues: Proline--tRNA ligase (478 aa).

This sequence belongs to the class-II aminoacyl-tRNA synthetase family. ProS type 3 subfamily. As to quaternary structure, homodimer.

The protein resides in the cytoplasm. The catalysed reaction is tRNA(Pro) + L-proline + ATP = L-prolyl-tRNA(Pro) + AMP + diphosphate. Functionally, catalyzes the attachment of proline to tRNA(Pro) in a two-step reaction: proline is first activated by ATP to form Pro-AMP and then transferred to the acceptor end of tRNA(Pro). The polypeptide is Proline--tRNA ligase (Oceanobacillus iheyensis (strain DSM 14371 / CIP 107618 / JCM 11309 / KCTC 3954 / HTE831)).